A 91-amino-acid chain; its full sequence is MKTLLLTLVVVTIVCLDLGYTRICHKSSFISETCPDGQNLCYLKSWCDIFCGSRGERLEFGCAATCPEVKPGVNIECCSTDNCNPHPKLRP.

Positions 1 to 21 (MKTLLLTLVVVTIVCLDLGYT) are cleaved as a signal peptide. Intrachain disulfides connect C24–C41, C34–C62, C47–C51, C66–C77, and C78–C83.

This sequence belongs to the three-finger toxin family. Long-chain subfamily. Type II alpha-neurotoxin sub-subfamily. Expressed by the venom gland.

The protein resides in the secreted. Its function is as follows. Binds with high affinity to muscular (alpha-1/CHRNA1) and neuronal (alpha-7/CHRNA7) nicotinic acetylcholine receptor (nAChR) and inhibits acetylcholine from binding to the receptor, thereby impairing neuromuscular and neuronal transmission. This chain is Long neurotoxin OH-57, found in Ophiophagus hannah (King cobra).